Reading from the N-terminus, the 63-residue chain is Large ribosomal subunit protein bL33 (63 aa).

The protein belongs to the bacterial ribosomal protein bL33 family.

The chain is Large ribosomal subunit protein bL33 from Gloeobacter violaceus (strain ATCC 29082 / PCC 7421).